The sequence spans 313 residues: Ribosomal RNA small subunit methyltransferase H (313 aa).

S-adenosyl-L-methionine is bound by residues 35-37 (GGH), aspartate 55, phenylalanine 81, aspartate 103, and glutamine 110.

It belongs to the methyltransferase superfamily. RsmH family.

It localises to the cytoplasm. The enzyme catalyses cytidine(1402) in 16S rRNA + S-adenosyl-L-methionine = N(4)-methylcytidine(1402) in 16S rRNA + S-adenosyl-L-homocysteine + H(+). Specifically methylates the N4 position of cytidine in position 1402 (C1402) of 16S rRNA. This is Ribosomal RNA small subunit methyltransferase H from Pseudomonas syringae pv. syringae (strain B728a).